Reading from the N-terminus, the 419-residue chain is UDP-N-acetylglucosamine 1-carboxyvinyltransferase (419 aa).

Lysine 22–asparagine 23 contributes to the phosphoenolpyruvate binding site. Arginine 93 contacts UDP-N-acetyl-alpha-D-glucosamine. The active-site Proton donor is cysteine 117. Cysteine 117 is modified (2-(S-cysteinyl)pyruvic acid O-phosphothioketal). The UDP-N-acetyl-alpha-D-glucosamine site is built by aspartate 306 and isoleucine 328.

It belongs to the EPSP synthase family. MurA subfamily.

It is found in the cytoplasm. It catalyses the reaction phosphoenolpyruvate + UDP-N-acetyl-alpha-D-glucosamine = UDP-N-acetyl-3-O-(1-carboxyvinyl)-alpha-D-glucosamine + phosphate. It functions in the pathway cell wall biogenesis; peptidoglycan biosynthesis. In terms of biological role, cell wall formation. Adds enolpyruvyl to UDP-N-acetylglucosamine. The polypeptide is UDP-N-acetylglucosamine 1-carboxyvinyltransferase (Magnetococcus marinus (strain ATCC BAA-1437 / JCM 17883 / MC-1)).